Reading from the N-terminus, the 479-residue chain is FAD-dependent monooxygenase sdcF (479 aa).

In terms of domain architecture, FAD-binding PCMH-type spans 40 to 213 (AQLPPSCFVL…TLFDMEAFST (174 aa)). His79 carries the post-translational modification Pros-8alpha-FAD histidine.

Belongs to the oxygen-dependent FAD-linked oxidoreductase family. FAD serves as cofactor.

The protein operates within secondary metabolite biosynthesis. In terms of biological role, FAD-dependent monooxygenase; part of the gene cluster that mediates the biosynthesis of the polyenes aspernidgulenes. The carbon backbone of aspernidgulenes is synthesized by the HR-PKS sdgA, which accepts acetyl-CoA as the starter unit and performs malonyl-CoA extensions as well as regioselective methylation and reduction. The resulting nonaketide offloads the HR-PKS by intramolecular lactonization to yield the 5,6-dihydro-alpha-pyrone-containing hexaenoic acids preaspernidgulene A1 and A2. The FAD-dependent monooxygenase sdgC then installs the first epoxide on the penultimate double bond. Subsequently, the FAD-dependent monooxygenase sdgF presumably generates a ketone intermediate through Meinwald rearrangement involving a hydride shift. Next, sdgC introduces another epoxide on the last olefin of the ketone intermediate after E/Z isomerization. The epoxide hydrolase sdgD then catalyzes stereospecific cyclization of the 5,6-dihydro-alpha-pyrone and opening of the epoxide ring to form an oxygenated trimethylcyclopentanone and an oxabicyclo[2.2.1]heptane unit. Finally, the bicyclic unit undergoes hydrolytic cleavage, either spontaneously or catalyzed by sdgD, to assemble the dimethyl-gamma-lactone moiety in aspernidgulene A1. The protein is FAD-dependent monooxygenase sdcF of Emericella nidulans (strain FGSC A4 / ATCC 38163 / CBS 112.46 / NRRL 194 / M139) (Aspergillus nidulans).